The primary structure comprises 328 residues: Beta-ketoacyl-[acyl-carrier-protein] synthase III (328 aa).

Active-site residues include Cys122 and His255. An ACP-binding region spans residues 256 to 260 (QANVR). The active site involves Asn285.

This sequence belongs to the thiolase-like superfamily. FabH family. Homodimer.

It is found in the cytoplasm. The catalysed reaction is malonyl-[ACP] + acetyl-CoA + H(+) = 3-oxobutanoyl-[ACP] + CO2 + CoA. Its pathway is lipid metabolism; fatty acid biosynthesis. Functionally, catalyzes the condensation reaction of fatty acid synthesis by the addition to an acyl acceptor of two carbons from malonyl-ACP. Catalyzes the first condensation reaction which initiates fatty acid synthesis and may therefore play a role in governing the total rate of fatty acid production. Possesses both acetoacetyl-ACP synthase and acetyl transacylase activities. Its substrate specificity determines the biosynthesis of branched-chain and/or straight-chain of fatty acids. This Bordetella petrii (strain ATCC BAA-461 / DSM 12804 / CCUG 43448) protein is Beta-ketoacyl-[acyl-carrier-protein] synthase III.